The chain runs to 138 residues: Sporulation-specific protein 13 (138 aa).

The segment covering 1–11 has biased composition (polar residues); the sequence is MMSNSQISKLF. The segment at 1 to 31 is disordered; it reads MMSNSQISKLFSSISNKENSNENALKESTNK. A compositionally biased stretch (low complexity) spans 12 to 23; sequence SSISNKENSNEN. The stretch at 16–104 forms a coiled coil; it reads NKENSNENAL…KRELDYLRAK (89 aa).

In terms of assembly, interacts with spo2.

It localises to the cytoplasm. It is found in the cytoskeleton. The protein localises to the microtubule organizing center. The protein resides in the spindle pole body. In terms of biological role, involved in sporulation. Plays a significant role in modification of the spindle pole body prior to spore formation and is required for initiating forespore membrane formation. The protein is Sporulation-specific protein 13 (spo13) of Schizosaccharomyces pombe (strain 972 / ATCC 24843) (Fission yeast).